The sequence spans 149 residues: Secreted RxLR effector protein 17 (149 aa).

The first 24 residues, 1 to 24 (MRLFYFSAMSVIGLLARNNMVVVA), serve as a signal peptide directing secretion. The RxLR-dEER signature appears at 52–78 (RSLRTREKDIQDSTVAKDDAIKVEEDR).

It belongs to the RxLR effector family.

It is found in the secreted. Its subcellular location is the host cytoplasm. It localises to the host nucleus. Functionally, effector that acts as a broad suppressor of cell death to interrupt plant immunity. Inhibits cell death induced by cell death-inducing proteins, including the PAMP elicitor INF1 from P.infestans. The chain is Secreted RxLR effector protein 17 from Plasmopara viticola (Downy mildew of grapevine).